The primary structure comprises 184 residues: Putative NAD(P)H nitroreductase HI_1542 (184 aa).

FMN-binding positions include 10–12, arginine 35, and histidine 39; that span reads RKS. 122-127 contacts NAD(+); sequence AAQAQG. Residue 132 to 134 participates in FMN binding; it reads WIS.

The protein belongs to the nitroreductase family. In terms of assembly, homodimer. FMN serves as cofactor.

In Haemophilus influenzae (strain ATCC 51907 / DSM 11121 / KW20 / Rd), this protein is Putative NAD(P)H nitroreductase HI_1542.